Consider the following 151-residue polypeptide: Deoxyuridine 5'-triphosphate nucleotidohydrolase (151 aa).

Residues 70–72 (RSG), Asn83, 87–89 (LID), and Met97 each bind substrate.

Belongs to the dUTPase family. Mg(2+) is required as a cofactor.

The enzyme catalyses dUTP + H2O = dUMP + diphosphate + H(+). It participates in pyrimidine metabolism; dUMP biosynthesis; dUMP from dCTP (dUTP route): step 2/2. In terms of biological role, this enzyme is involved in nucleotide metabolism: it produces dUMP, the immediate precursor of thymidine nucleotides and it decreases the intracellular concentration of dUTP so that uracil cannot be incorporated into DNA. The chain is Deoxyuridine 5'-triphosphate nucleotidohydrolase from Pseudomonas putida (strain W619).